The chain runs to 443 residues: Ribosomal protein uS12 methylthiotransferase RimO (443 aa).

In terms of domain architecture, MTTase N-terminal spans 8–118; the sequence is PKVGFVSLGC…VVNAVHEVVP (111 aa). [4Fe-4S] cluster is bound by residues C17, C53, C82, C151, C155, and C158. In terms of domain architecture, Radical SAM core spans 137–375; sequence LTPRHYAYLK…MAHQQAISAA (239 aa). A TRAM domain is found at 378-443; that stretch reads QQRIGKEIEV…DEYDMWAEPI (66 aa).

Belongs to the methylthiotransferase family. RimO subfamily. [4Fe-4S] cluster is required as a cofactor.

The protein localises to the cytoplasm. The catalysed reaction is L-aspartate(89)-[ribosomal protein uS12]-hydrogen + (sulfur carrier)-SH + AH2 + 2 S-adenosyl-L-methionine = 3-methylsulfanyl-L-aspartate(89)-[ribosomal protein uS12]-hydrogen + (sulfur carrier)-H + 5'-deoxyadenosine + L-methionine + A + S-adenosyl-L-homocysteine + 2 H(+). In terms of biological role, catalyzes the methylthiolation of an aspartic acid residue of ribosomal protein uS12. This chain is Ribosomal protein uS12 methylthiotransferase RimO, found in Pseudomonas entomophila (strain L48).